A 402-amino-acid polypeptide reads, in one-letter code: MKRFISAWNRTSLIKRIAIGVVIGAILGLLIPKITVIGLLGDMFVGGLKAIAPLLVSALVANALSQTREGQQSNMKTIIVLYLFGTFAAALTAVISHYIFPISLKLGATSATKAAAPQGVGEVFKDLMLKMVDNPINALSQANYIGVLLWAVVFGFAMRTASEHTKELLHTLSEVTSQIVRWIINLAPFGILGLVFDTISKNGVGVLADYGVLILVLVGTMTFVALVINPIIAFVMMGKNPFPLVFRSLKDSRITAFFTRSSAANIPVNLQLCEDLGLNPDTYSVSIPLGSTINMAGAAVTINVLTLAAVTTLGIEVDFATAFILSVVSTISACGASGIAGGSLLLVPVACSLFGISNDLAMQVVGVGFIVGVIQDSCETALNSSTDVLFTAVAEKSRWKKS.

8 helical membrane-spanning segments follow: residues 17-37, 44-64, 78-98, 138-158, 179-199, 212-232, 295-315, and 336-356; these read IAIG…ITVI, FVGG…ANAL, IIVL…ISHY, ALSQ…GFAM, IVRW…FDTI, VLIL…NPII, MAGA…TLGI, and ASGI…LFGI.

This sequence belongs to the dicarboxylate/amino acid:cation symporter (DAACS) (TC 2.A.23) family.

The protein resides in the cell membrane. The enzyme catalyses L-serine(in) + Na(+)(in) = L-serine(out) + Na(+)(out). It carries out the reaction L-threonine(in) + Na(+)(in) = L-threonine(out) + Na(+)(out). Involved in the import of serine and threonine into the cell, with the concomitant import of sodium (symport system). The protein is Serine/threonine transporter SstT of Streptococcus thermophilus (strain CNRZ 1066).